The sequence spans 193 residues: ATP synthase subunit b (193 aa).

The chain crosses the membrane as a helical span at residues 35–55; it reads IPMMLATFIAFVIVFLLLFFF.

It belongs to the ATPase B chain family. As to quaternary structure, F-type ATPases have 2 components, F(1) - the catalytic core - and F(0) - the membrane proton channel. F(1) has five subunits: alpha(3), beta(3), gamma(1), delta(1), epsilon(1). F(0) has three main subunits: a(1), b(2) and c(10-14). The alpha and beta chains form an alternating ring which encloses part of the gamma chain. F(1) is attached to F(0) by a central stalk formed by the gamma and epsilon chains, while a peripheral stalk is formed by the delta and b chains.

It is found in the cell membrane. Its function is as follows. F(1)F(0) ATP synthase produces ATP from ADP in the presence of a proton or sodium gradient. F-type ATPases consist of two structural domains, F(1) containing the extramembraneous catalytic core and F(0) containing the membrane proton channel, linked together by a central stalk and a peripheral stalk. During catalysis, ATP synthesis in the catalytic domain of F(1) is coupled via a rotary mechanism of the central stalk subunits to proton translocation. In terms of biological role, component of the F(0) channel, it forms part of the peripheral stalk, linking F(1) to F(0). The chain is ATP synthase subunit b from Mycoplasmopsis synoviae (strain 53) (Mycoplasma synoviae).